The sequence spans 818 residues: Auxin response factor 12 (818 aa).

Low complexity predominate over residues 1–10 (MSSSSAASIG). The disordered stretch occupies residues 1 to 24 (MSSSSAASIGPPQPPPPPAPPEEE). The segment covering 11 to 20 (PPQPPPPPAP) has biased composition (pro residues). Residues 135-237 (FCKTLTASDT…QLLLGIRRAS (103 aa)) constitute a DNA-binding region (TF-B3). Disordered stretches follow at residues 526 to 565 (NDQK…FSDP) and 629 to 648 (GSVL…NKIG). Positions 629–640 (GSVLHNSPTSKD) are enriched in polar residues. In terms of domain architecture, PB1 spans 719-803 (RTFVKVYKSG…WYIKILSPED (85 aa)).

Belongs to the ARF family. As to quaternary structure, homodimers and heterodimers. As to expression, expressed in roots, culms, leaves and young panicles.

The protein resides in the nucleus. In terms of biological role, auxin response factors (ARFs) are transcriptional factors that bind specifically to the DNA sequence 5'-TGTCTC-3' found in the auxin-responsive promoter elements (AuxREs). This is Auxin response factor 12 (ARF12) from Oryza sativa subsp. japonica (Rice).